The primary structure comprises 179 residues: Large ribosomal subunit protein uL6 (179 aa).

It belongs to the universal ribosomal protein uL6 family. Part of the 50S ribosomal subunit.

Its function is as follows. This protein binds to the 23S rRNA, and is important in its secondary structure. It is located near the subunit interface in the base of the L7/L12 stalk, and near the tRNA binding site of the peptidyltransferase center. In Alkaliphilus metalliredigens (strain QYMF), this protein is Large ribosomal subunit protein uL6.